Reading from the N-terminus, the 292-residue chain is ATP phosphoribosyltransferase (292 aa).

The protein belongs to the ATP phosphoribosyltransferase family. Long subfamily. Requires Mg(2+) as cofactor.

It is found in the cytoplasm. It catalyses the reaction 1-(5-phospho-beta-D-ribosyl)-ATP + diphosphate = 5-phospho-alpha-D-ribose 1-diphosphate + ATP. It participates in amino-acid biosynthesis; L-histidine biosynthesis; L-histidine from 5-phospho-alpha-D-ribose 1-diphosphate: step 1/9. Its activity is regulated as follows. Feedback inhibited by histidine. In terms of biological role, catalyzes the condensation of ATP and 5-phosphoribose 1-diphosphate to form N'-(5'-phosphoribosyl)-ATP (PR-ATP). Has a crucial role in the pathway because the rate of histidine biosynthesis seems to be controlled primarily by regulation of HisG enzymatic activity. This is ATP phosphoribosyltransferase from Gemmatimonas aurantiaca (strain DSM 14586 / JCM 11422 / NBRC 100505 / T-27).